Consider the following 875-residue polypeptide: Protein SEY1 (875 aa).

The Cytoplasmic segment spans residues 1–749 (MVANGHFASN…KRSAIGGITQ (749 aa)). Positions 49–307 (GFNYHLISVF…IPADGFAVYA (259 aa)) constitute a GB1/RHD3-type G domain. A GTP-binding site is contributed by 59 to 66 (GSQSTGKS). Positions 482–506 (SNYQQELSLYQKDLERISGQLRRDE) form a coiled coil. The tract at residues 676 to 704 (LDKWIGHTPSSATPADEEDLTPIGGVDED) is disordered. A compositionally biased stretch (acidic residues) spans 690-704 (ADEEDLTPIGGVDED). Residues 750–770 (VPLYFYGLLLALGWNEIMAVL) form a helical membrane-spanning segment. Residues 771-773 (RNP) lie on the Lumenal side of the membrane. A helical transmembrane segment spans residues 774-794 (AYFFLLFVCAIGAYVTYQLNL). Residues 795-875 (WGPIIKMTEA…ADDDDVDDDF (81 aa)) lie on the Cytoplasmic side of the membrane. A disordered region spans residues 831–875 (MAMSGARNATEEHEMSNLNRKSGERGGQKYRGEDVADDDDVDDDF). The segment covering 839–864 (ATEEHEMSNLNRKSGERGGQKYRGED) has biased composition (basic and acidic residues). Residues 865 to 875 (VADDDDVDDDF) are compositionally biased toward acidic residues.

Belongs to the TRAFAC class dynamin-like GTPase superfamily. GB1/RHD3 GTPase family. RHD3 subfamily.

It is found in the endoplasmic reticulum membrane. Cooperates with the reticulon proteins and tubule-shaping DP1 family proteins to generate and maintain the structure of the tubular endoplasmic reticulum network. Has GTPase activity, which is required for its function in ER organization. The chain is Protein SEY1 from Ajellomyces dermatitidis (strain ER-3 / ATCC MYA-2586) (Blastomyces dermatitidis).